Reading from the N-terminus, the 332-residue chain is MLVDGKLVCVTGAGGYIASWIVKLLLERGYTVRGTVRNPTDPKNNHLRELQGAKERLTLHSADLLDYEALCATIDGCDGVFHTASPMTDDPETMLEPAVNGAKFVIDAAAKAKVKRVVFTSSIGAVYMNPNRDTQAIVDENCWSDLDFCKNTKNWYCYGKMLAEQSAWETAKAKGVDLVVLNPVLVLGPPLQSAINASLVHILKYLTGSAKTYANLTQVYVDVRDVALGHVLVYEAPSASGRYILAETALHRGEVVEILAKFFPEYPLPTKCSDEKNPRAKPYKFTTQKIKDLGLEFKPIKQSLYESVKSLQEKGHLPLPQDSNQNEVIIES.

Residues 12-18, Arg-37, Lys-43, 63-64, 83-85, Tyr-156, Lys-160, 183-186, and Ser-198 each bind NADP(+); these read GAGGYIA, DL, TAS, and PVLV. A disulfide bridge connects residues Cys-149 and Cys-157. The active-site Proton donor is the Lys-160.

The protein belongs to the NAD(P)-dependent epimerase/dehydratase family. Dihydroflavonol-4-reductase subfamily. In terms of tissue distribution, expressed at low levels in leaves, stems and flowers.

It carries out the reaction (E)-cinnamaldehyde + NADP(+) + CoA = (E)-cinnamoyl-CoA + NADPH + H(+). The protein operates within aromatic compound metabolism; phenylpropanoid biosynthesis. In terms of biological role, cinnamoyl-CoA reductase probably involved in the formation of phenolic compounds associated with the hypersensitive response. Seems not to be involved in lignin biosynthesis. The protein is Cinnamoyl-CoA reductase 2 (CCR2) of Arabidopsis thaliana (Mouse-ear cress).